The following is a 221-amino-acid chain: SIN3-HDAC complex-associated factor (221 aa).

Positions 112–121 (QKEFKRHNSD) are enriched in basic and acidic residues. 2 disordered regions span residues 112–152 (QKEF…MASG) and 201–221 (AAAE…TQEW). The span at 124–135 (STTSSASPAQSP) shows a compositional bias: low complexity. Residues 136-152 (CYSNQSDDGSDTEMASG) are compositionally biased toward polar residues.

The protein belongs to the SINHCAF family. Interacts with the Sin3/HDAC corepressor complex at least composed of BRMS1, BRMS1L, ING2, SAP30, SAP30L and HDAC1. Found in a complex composed of at least SINHCAF, SIN3A, HDAC1, SAP30, RBBP4, OGT and TET1. Interacts with SIN3A and OGT.

The protein localises to the nucleus. Its function is as follows. Subunit of the Sin3 deacetylase complex (Sin3/HDAC), this subunit is important for the repression of genes encoding components of the TGF-beta signaling pathway. Core component of a SIN3A complex (composed of at least SINHCAF, SIN3A, HDAC1, SAP30, RBBP4, OGT and TET1) present in embryonic stem (ES) cells. Promotes the stability of SIN3A and its presence on chromatin and is essential for maintaining the potential of ES cells to proliferate rapidly, while ensuring a short G1-phase of the cell cycle, thereby preventing premature lineage priming. The chain is SIN3-HDAC complex-associated factor from Homo sapiens (Human).